Reading from the N-terminus, the 418-residue chain is Putative ion-transport protein YfeO (418 aa).

The next 11 membrane-spanning stretches (helical) occupy residues 9-31 (MLLL…IVVM), 55-77 (SPLW…IRFS), 90-112 (LIGA…LGLA), 122-140 (PIMT…RLLP), 147-169 (WTIL…AALI), 189-211 (PLMA…FSLP), 223-244 (ILSG…VWCL), 259-281 (LVLG…VSLF), 301-323 (YFLL…FRGG), 343-363 (VPAV…VLVV), and 376-398 (VVVP…WLLL).

It belongs to the chloride channel (TC 2.A.49) family.

It is found in the cell membrane. This is Putative ion-transport protein YfeO (yfeO) from Escherichia coli O157:H7.